Reading from the N-terminus, the 370-residue chain is Dual-specificity RNA methyltransferase RlmN (370 aa).

Glu-93 serves as the catalytic Proton acceptor. Residues 99 to 337 enclose the Radical SAM core domain; it reads EEGRGTLCVS…VTTVRKTRGD (239 aa). Residues Cys-106 and Cys-343 are joined by a disulfide bond. Residues Cys-113, Cys-117, and Cys-120 each contribute to the [4Fe-4S] cluster site. S-adenosyl-L-methionine contacts are provided by residues 167-168, Ser-199, 221-223, and Asn-300; these read GE and SLH. Cys-343 serves as the catalytic S-methylcysteine intermediate.

The protein belongs to the radical SAM superfamily. RlmN family. It depends on [4Fe-4S] cluster as a cofactor.

The protein localises to the cytoplasm. It carries out the reaction adenosine(2503) in 23S rRNA + 2 reduced [2Fe-2S]-[ferredoxin] + 2 S-adenosyl-L-methionine = 2-methyladenosine(2503) in 23S rRNA + 5'-deoxyadenosine + L-methionine + 2 oxidized [2Fe-2S]-[ferredoxin] + S-adenosyl-L-homocysteine. It catalyses the reaction adenosine(37) in tRNA + 2 reduced [2Fe-2S]-[ferredoxin] + 2 S-adenosyl-L-methionine = 2-methyladenosine(37) in tRNA + 5'-deoxyadenosine + L-methionine + 2 oxidized [2Fe-2S]-[ferredoxin] + S-adenosyl-L-homocysteine. In terms of biological role, specifically methylates position 2 of adenine 2503 in 23S rRNA and position 2 of adenine 37 in tRNAs. m2A2503 modification seems to play a crucial role in the proofreading step occurring at the peptidyl transferase center and thus would serve to optimize ribosomal fidelity. This is Dual-specificity RNA methyltransferase RlmN from Francisella tularensis subsp. novicida (strain U112).